The primary structure comprises 473 residues: Photosystem II CP43 reaction center protein (473 aa).

Positions 1–14 are excised as a propeptide; the sequence is MKTLYSRRRFYHVE. N-acetylthreonine is present on Thr15. Phosphothreonine is present on Thr15. Helical transmembrane passes span 69 to 93, 134 to 155, 178 to 200, 255 to 275, and 291 to 312; these read LFEVAHFVPEKPMYEQGLILLPHLA, LLGPETLEESFPFFGYVWKDRN, KALYFGGVYDTWAPGGGDVRKIT, KPFAWARRALVWSGEAYLSYS, and WFNNTAYPSEFYGPTGPEASQA. Position 367 (Glu367) interacts with [CaMn4O5] cluster. Residues 447 to 471 traverse the membrane as a helical segment; that stretch reads RARAAAAGFEKGIDRDFEPVLSMTP.

This sequence belongs to the PsbB/PsbC family. PsbC subfamily. As to quaternary structure, PSII is composed of 1 copy each of membrane proteins PsbA, PsbB, PsbC, PsbD, PsbE, PsbF, PsbH, PsbI, PsbJ, PsbK, PsbL, PsbM, PsbT, PsbX, PsbY, PsbZ, Psb30/Ycf12, at least 3 peripheral proteins of the oxygen-evolving complex and a large number of cofactors. It forms dimeric complexes. It depends on Binds multiple chlorophylls and provides some of the ligands for the Ca-4Mn-5O cluster of the oxygen-evolving complex. It may also provide a ligand for a Cl- that is required for oxygen evolution. PSII binds additional chlorophylls, carotenoids and specific lipids. as a cofactor.

The protein localises to the plastid. Its subcellular location is the chloroplast thylakoid membrane. Its function is as follows. One of the components of the core complex of photosystem II (PSII). It binds chlorophyll and helps catalyze the primary light-induced photochemical processes of PSII. PSII is a light-driven water:plastoquinone oxidoreductase, using light energy to abstract electrons from H(2)O, generating O(2) and a proton gradient subsequently used for ATP formation. The sequence is that of Photosystem II CP43 reaction center protein from Solanum bulbocastanum (Wild potato).